The chain runs to 337 residues: Ketol-acid reductoisomerase (NADP(+)) (337 aa).

The KARI N-terminal Rossmann domain maps to 3 to 183 (VEMFYDDDAD…GGTRAGVIKT (181 aa)). NADP(+) contacts are provided by residues 26 to 29 (YGSQ), S52, S54, and 84 to 87 (DTAQ). H109 is an active-site residue. G135 is an NADP(+) binding site. Residues 184 to 329 (TFKEETETDL…AKLRGLMSWV (146 aa)) enclose the KARI C-terminal knotted domain. Residues D192, E196, E228, and E232 each contribute to the Mg(2+) site. S253 is a substrate binding site.

The protein belongs to the ketol-acid reductoisomerase family. Mg(2+) serves as cofactor.

It carries out the reaction (2R)-2,3-dihydroxy-3-methylbutanoate + NADP(+) = (2S)-2-acetolactate + NADPH + H(+). The catalysed reaction is (2R,3R)-2,3-dihydroxy-3-methylpentanoate + NADP(+) = (S)-2-ethyl-2-hydroxy-3-oxobutanoate + NADPH + H(+). It participates in amino-acid biosynthesis; L-isoleucine biosynthesis; L-isoleucine from 2-oxobutanoate: step 2/4. Its pathway is amino-acid biosynthesis; L-valine biosynthesis; L-valine from pyruvate: step 2/4. In terms of biological role, involved in the biosynthesis of branched-chain amino acids (BCAA). Catalyzes an alkyl-migration followed by a ketol-acid reduction of (S)-2-acetolactate (S2AL) to yield (R)-2,3-dihydroxy-isovalerate. In the isomerase reaction, S2AL is rearranged via a Mg-dependent methyl migration to produce 3-hydroxy-3-methyl-2-ketobutyrate (HMKB). In the reductase reaction, this 2-ketoacid undergoes a metal-dependent reduction by NADPH to yield (R)-2,3-dihydroxy-isovalerate. The sequence is that of Ketol-acid reductoisomerase (NADP(+)) from Nocardia farcinica (strain IFM 10152).